The primary structure comprises 119 residues: Divalent-cation tolerance protein CutA (119 aa).

3 residues coordinate Cu cation: cysteine 23, histidine 90, and histidine 91.

It belongs to the CutA family. In terms of assembly, homotrimer. Cu cation serves as cofactor.

It localises to the cytoplasm. Involved in resistance toward heavy metals. The sequence is that of Divalent-cation tolerance protein CutA from Yersinia pseudotuberculosis serotype O:1b (strain IP 31758).